A 100-amino-acid chain; its full sequence is Small ribosomal subunit protein uS14c (100 aa).

Belongs to the universal ribosomal protein uS14 family. As to quaternary structure, part of the 30S ribosomal subunit.

The protein localises to the plastid. It is found in the chloroplast. Its function is as follows. Binds 16S rRNA, required for the assembly of 30S particles. The sequence is that of Small ribosomal subunit protein uS14c from Trieres chinensis (Marine centric diatom).